A 430-amino-acid chain; its full sequence is MLPREIEELLNIILQHNTWRRKETINLIASENVMSPLAELVYVNDFAGRYAEGTVGNRYYQGTKYVDILEDSLSKRFAKVLDAKFVDVRPISGTIANLATYHALVPEGGIVASLPVKYGGHISHNTVGGLKALRVKTVELPWDFENFNIDIDAARKIIEEKRPNLIILGASLYLFPHPVREIANAAKAVGAYVLHDSAHVFGLIIGGVFPNPLKEGAHVITSSTHKTFPGPQGGLIASVTDEELNNAIQRAVFPVFTSNYHLHRYAATYVTLIEMEHFGAEYGARIVENAKALAEALAEEGVTPVGERLGYTKTHQVAVDVSKFGGGDKVARLLEEANIIVNKNALPWDKSVLKPSGIRMGVQEMTRFGMGKGEMKEIAKFIARVLKGEDPTAVKREVVEFRKTFIEIKYGFKIDKEIIDKIFYSLNLYT.

Residue 120–122 (GHI) coordinates (6S)-5,6,7,8-tetrahydrofolate. Lysine 226 carries the N6-(pyridoxal phosphate)lysine modification.

It belongs to the SHMT family. As to quaternary structure, homodimer. Pyridoxal 5'-phosphate serves as cofactor.

The protein resides in the cytoplasm. It participates in amino-acid biosynthesis; glycine biosynthesis; glycine from L-serine: step 1/1. Functionally, catalyzes the reversible interconversion of serine and glycine with a modified folate serving as the one-carbon carrier. Also exhibits a pteridine-independent aldolase activity toward beta-hydroxyamino acids, producing glycine and aldehydes, via a retro-aldol mechanism. This Pyrobaculum aerophilum (strain ATCC 51768 / DSM 7523 / JCM 9630 / CIP 104966 / NBRC 100827 / IM2) protein is Serine hydroxymethyltransferase.